Here is a 256-residue protein sequence, read N- to C-terminus: UPF0246 protein Swoo_1284 (256 aa).

This sequence belongs to the UPF0246 family.

The chain is UPF0246 protein Swoo_1284 from Shewanella woodyi (strain ATCC 51908 / MS32).